A 193-amino-acid polypeptide reads, in one-letter code: Large ribosomal subunit protein bL25 (193 aa).

The protein belongs to the bacterial ribosomal protein bL25 family. CTC subfamily. As to quaternary structure, part of the 50S ribosomal subunit; part of the 5S rRNA/L5/L18/L25 subcomplex. Contacts the 5S rRNA. Binds to the 5S rRNA independently of L5 and L18.

Functionally, this is one of the proteins that binds to the 5S RNA in the ribosome where it forms part of the central protuberance. The protein is Large ribosomal subunit protein bL25 of Lachnoclostridium phytofermentans (strain ATCC 700394 / DSM 18823 / ISDg) (Clostridium phytofermentans).